The primary structure comprises 74 residues: U5-theraphotoxin-Cg1a (74 aa).

Residues 1 to 19 (MNATIFALLLLLNLAMYNA) form the signal peptide. Positions 20 to 39 (AEQSSETDMDDTLLIPENYR) are excised as a propeptide. Intrachain disulfides connect Cys-42–Cys-56, Cys-49–Cys-61, and Cys-55–Cys-71.

It belongs to the neurotoxin 36 family. 01 subfamily. In terms of tissue distribution, expressed by the venom gland.

The protein resides in the secreted. Its function is as follows. Probable ion channel inhibitor. The sequence is that of U5-theraphotoxin-Cg1a from Chilobrachys guangxiensis (Chinese earth tiger tarantula).